The primary structure comprises 185 residues: MKKQLFWAPQNEIPSTLWTANERSWLTHPGSLTQRLRKTTDGQIQHHLLREVFDAPVDEETQLLGISQPELALIREIEWRYFESLWVAGRVVIPKKTLEREGSPLNHIGERSLGDILFANAKFTRGDLEFRQITADHPYYFYVKEIANGSCIWARRSLFYFERDPLLVSEIFSPALFLESSVSND.

Positions 75, 113, and 170 each coordinate substrate.

It belongs to the UbiC family.

It localises to the cytoplasm. It carries out the reaction chorismate = 4-hydroxybenzoate + pyruvate. It participates in cofactor biosynthesis; ubiquinone biosynthesis. Functionally, removes the pyruvyl group from chorismate, with concomitant aromatization of the ring, to provide 4-hydroxybenzoate (4HB) for the ubiquinone pathway. In Coxiella burnetii (strain RSA 493 / Nine Mile phase I), this protein is Probable chorismate pyruvate-lyase.